We begin with the raw amino-acid sequence, 416 residues long: MGRFTLKCLKCGREYGQEYRLTCDNDDSLLRADYFEKKLELRDQPGIGRFHSWLPVQEELTTEAGPITYKSEALAKELGLSNLYIGFSGYWPEREALIKTCSFKELEAHPTMQLLKESGGKAIVLASAGNTGRAFAYSSSLTGTDAYIVVPDSGVSSIWLPEEPANSIHLISMTPGNDYTDAINLAGRLAKLPGMVPEGGARNVARREGMGTVMLDAAVTIGKMPDHYFQAVGSGTGGMSAWEASLRLRDDGRFGSKLPKLQLAQNLPFVPMYNAWKAGRREIIPDIDMKDAKKQIEETYATVLTNRAPPYSITGGLYDALVDTDGIMYAITREEALEAKALFESLEGIDILEPSAVAAASLLKAVEAGNVEKDDVILLNIAGGGFKRLKEDFTLFQVEPEVTVSSSEVSLDELKI.

The residue at position 104 (lysine 104) is an N6-(pyridoxal phosphate)lysine. A pyridoxal 5'-phosphate-binding site is contributed by asparagine 130.

Belongs to the threonine synthase family. Cysteate synthase subfamily. Homotrimer. Pyridoxal 5'-phosphate is required as a cofactor.

It catalyses the reaction O-phospho-L-serine + sulfite + H(+) = L-cysteate + phosphate. The protein operates within cofactor biosynthesis; coenzyme M biosynthesis. Specifically catalyzes the beta-elimination of phosphate from L-phosphoserine and the beta-addition of sulfite to the dehydroalanine intermediate to produce L-cysteate. The polypeptide is Cysteate synthase (Methanosarcina mazei (strain ATCC BAA-159 / DSM 3647 / Goe1 / Go1 / JCM 11833 / OCM 88) (Methanosarcina frisia)).